We begin with the raw amino-acid sequence, 169 residues long: Non-specific lipid transfer protein GPI-anchored 11 (169 aa).

A signal peptide spans 1–23 (MAYATILMIFSVVALMSGERAHA). Cystine bridges form between C27–C70, C37–C54, C55–C95, and C68–C105. The GPI-anchor amidated serine moiety is linked to residue S146. Residues 147-169 (SDASLLSVSFAFVIFMALISSFY) constitute a propeptide, removed in mature form.

It belongs to the plant LTP family. Expressed in a vascular-specific manner, mainly in roots, and, to a lower extent, in hypocotyls, seedlings stems and flowers.

The protein localises to the cell membrane. It is found in the secreted. Its function is as follows. Probable lipid transfer protein. Proteoglycan-like factor that exhibits xylogen activity consisting in mediating local and inductive cell-cell interactions required for xylem differentiation. The protein is Non-specific lipid transfer protein GPI-anchored 11 of Arabidopsis thaliana (Mouse-ear cress).